A 315-amino-acid polypeptide reads, in one-letter code: Probable cell division protein WhiA (315 aa).

Positions S280–Q313 form a DNA-binding region, H-T-H motif.

Belongs to the WhiA family.

Involved in cell division and chromosome segregation. The sequence is that of Probable cell division protein WhiA from Clostridium botulinum (strain ATCC 19397 / Type A).